Consider the following 118-residue polypeptide: Large ribosomal subunit protein uL18 (118 aa).

Positions 1–25 (MISKPDKNKLRQKRHRRVRGKLSGT) are disordered. Positions 10–20 (LRQKRHRRVRG) are enriched in basic residues.

This sequence belongs to the universal ribosomal protein uL18 family. Part of the 50S ribosomal subunit; part of the 5S rRNA/L5/L18/L25 subcomplex. Contacts the 5S and 23S rRNAs.

This is one of the proteins that bind and probably mediate the attachment of the 5S RNA into the large ribosomal subunit, where it forms part of the central protuberance. The polypeptide is Large ribosomal subunit protein uL18 (Streptococcus pneumoniae (strain Hungary19A-6)).